The following is a 264-amino-acid chain: Virulence plasmid protein pGP3-D (264 aa).

This chain is Virulence plasmid protein pGP3-D, found in Chlamydia trachomatis serovar L2 (strain ATCC VR-902B / DSM 19102 / 434/Bu).